A 197-amino-acid chain; its full sequence is MSKSFYGYIRDAWKNPDETYVRDLRWERLQVWRKEGSVTRVERPTRIDRARSLGYKAKQGIVVARVKVRRGSMRKSRYIRGRRTQHTGKNKITVGKSIQRISEERAARKYPNMEVLNSYWVGEDGKQKWYEVILVDPSHPVIKSDKNLNWICGKAHSGRVFRGKTSAGRKGRGMQTRGTGTEKTRPSVRSNLNRSKK.

A compositionally biased stretch (basic residues) spans 163 to 172; sequence GKTSAGRKGR. The tract at residues 163-197 is disordered; that stretch reads GKTSAGRKGRGMQTRGTGTEKTRPSVRSNLNRSKK. Residues 186 to 197 show a composition bias toward polar residues; the sequence is PSVRSNLNRSKK.

This sequence belongs to the eukaryotic ribosomal protein eL15 family.

The chain is Large ribosomal subunit protein eL15 from Methanococcoides burtonii (strain DSM 6242 / NBRC 107633 / OCM 468 / ACE-M).